A 134-amino-acid polypeptide reads, in one-letter code: MATCRSRGVERGGAPHVLAVDDSSVDRAVISGILRSSQFRVTAVDSGKRALELLGSEPNVSMIITDYWMPEMTGYELLKKVKESSRLKEIPVVIMSSENVSTRINRCLEEGAEDFLLKPVQPSDVSRLCSRVLR.

One can recognise a Response regulatory domain in the interval 16 to 133 (HVLAVDDSSV…DVSRLCSRVL (118 aa)). 4-aspartylphosphate is present on D66.

The protein belongs to the ARR family. Type-A subfamily. Two-component system major event consists of a His-to-Asp phosphorelay between a sensor histidine kinase (HK) and a response regulator (RR). In plants, the His-to-Asp phosphorelay involves an additional intermediate named Histidine-containing phosphotransfer protein (HPt). This multistep phosphorelay consists of a His-Asp-His-Asp sequential transfer of a phosphate group between first a His and an Asp of the HK protein, followed by the transfer to a conserved His of the HPt protein and finally the transfer to an Asp in the receiver domain of the RR protein. Expressed in mature leaves and shoots, and at low levels in roots and flowers.

In terms of biological role, functions as a response regulator involved in His-to-Asp phosphorelay signal transduction system. Phosphorylation of the Asp residue in the receiver domain activates the ability of the protein to promote the transcription of target genes. Type-A response regulators seem to act as negative regulators of the cytokinin signaling. This Oryza sativa subsp. indica (Rice) protein is Two-component response regulator ORR5.